We begin with the raw amino-acid sequence, 307 residues long: NAD(+) hydrolase TcpC (307 aa).

Residues 22 to 42 (YNILFFIFLSIAIPFLLFLAW) traverse the membrane as a helical segment. The 135-residue stretch at 169-303 (THYDFFISHA…EIARELAEIA (135 aa)) folds into the TIR domain. Residues 178–179 (AK) and Glu208 each bind NAD(+). Residue Glu244 is part of the active site.

In terms of assembly, interacts with host MYD88. Interacts with host TLR4.

It is found in the secreted. The protein localises to the membrane. It carries out the reaction NAD(+) + H2O = ADP-D-ribose + nicotinamide + H(+). The enzyme catalyses NADP(+) + H2O = ADP-D-ribose 2'-phosphate + nicotinamide + H(+). Virulence factor that suppresses host Toll-like receptor (TLR)-mediated cytokine production upon infection, thereby increasing bacterial burden in the urinary tract and promoting renal tissue damage. Acts as a NAD(+) hydrolase (NADase) by catalyzing cleavage of NAD(+) into ADP-D-ribose (ADPR) and nicotinamide. Also able to hydrolyze NADP(+), but not other NAD(+)-related molecules. This is NAD(+) hydrolase TcpC from Escherichia coli O6:H1 (strain CFT073 / ATCC 700928 / UPEC).